The sequence spans 98 residues: uncharacterized protein (98 aa).

Residues 1–85 enclose the STAS domain; that stretch reads MLETVPVRCV…GTLKQALENM (85 aa).

Phosphorylated on threonine residue(s). Phosphorylated by PrkC and dephosphorylated by PrpC.

It is found in the cytoplasm. This is an uncharacterized protein from Bacillus subtilis (strain 168).